We begin with the raw amino-acid sequence, 432 residues long: Gamma-glutamyl phosphate reductase (432 aa).

It belongs to the gamma-glutamyl phosphate reductase family.

It is found in the cytoplasm. It catalyses the reaction L-glutamate 5-semialdehyde + phosphate + NADP(+) = L-glutamyl 5-phosphate + NADPH + H(+). It functions in the pathway amino-acid biosynthesis; L-proline biosynthesis; L-glutamate 5-semialdehyde from L-glutamate: step 2/2. Its function is as follows. Catalyzes the NADPH-dependent reduction of L-glutamate 5-phosphate into L-glutamate 5-semialdehyde and phosphate. The product spontaneously undergoes cyclization to form 1-pyrroline-5-carboxylate. This Methylorubrum extorquens (strain PA1) (Methylobacterium extorquens) protein is Gamma-glutamyl phosphate reductase.